The following is a 604-amino-acid chain: Aspartate--tRNA(Asp/Asn) ligase (604 aa).

Residue glutamate 177 coordinates L-aspartate. The interval glutamine 201 to lysine 204 is aspartate. L-aspartate is bound at residue arginine 223. ATP contacts are provided by residues arginine 223 to glutamate 225 and glutamine 232. L-aspartate is bound at residue histidine 457. ATP is bound at residue glutamate 495. Arginine 502 lines the L-aspartate pocket. Glycine 547 to arginine 550 is an ATP binding site.

It belongs to the class-II aminoacyl-tRNA synthetase family. Type 1 subfamily. As to quaternary structure, homodimer.

It is found in the cytoplasm. It carries out the reaction tRNA(Asx) + L-aspartate + ATP = L-aspartyl-tRNA(Asx) + AMP + diphosphate. Functionally, aspartyl-tRNA synthetase with relaxed tRNA specificity since it is able to aspartylate not only its cognate tRNA(Asp) but also tRNA(Asn). Reaction proceeds in two steps: L-aspartate is first activated by ATP to form Asp-AMP and then transferred to the acceptor end of tRNA(Asp/Asn). This chain is Aspartate--tRNA(Asp/Asn) ligase, found in Synechococcus sp. (strain RCC307).